Reading from the N-terminus, the 456-residue chain is ATP synthase subunit beta 1 (456 aa).

Residue 152–159 (GGAGVGKS) coordinates ATP.

It belongs to the ATPase alpha/beta chains family. In terms of assembly, F-type ATPases have 2 components, CF(1) - the catalytic core - and CF(0) - the membrane proton channel. CF(1) has five subunits: alpha(3), beta(3), gamma(1), delta(1), epsilon(1). CF(0) has three main subunits: a(1), b(2) and c(9-12). The alpha and beta chains form an alternating ring which encloses part of the gamma chain. CF(1) is attached to CF(0) by a central stalk formed by the gamma and epsilon chains, while a peripheral stalk is formed by the delta and b chains.

The protein resides in the cell membrane. The enzyme catalyses ATP + H2O + 4 H(+)(in) = ADP + phosphate + 5 H(+)(out). Produces ATP from ADP in the presence of a proton gradient across the membrane. The catalytic sites are hosted primarily by the beta subunits. The chain is ATP synthase subunit beta 1 from Listeria innocua serovar 6a (strain ATCC BAA-680 / CLIP 11262).